Reading from the N-terminus, the 358-residue chain is Methionine import ATP-binding protein MetN (358 aa).

Residues 2–247 form the ABC transporter domain; the sequence is ITTTGLTKVY…PGSELAHELF (246 aa). 38-45 provides a ligand contact to ATP; sequence GQSGAGKS.

Belongs to the ABC transporter superfamily. Methionine importer (TC 3.A.1.24) family. In terms of assembly, the complex is composed of two ATP-binding proteins (MetN), two transmembrane proteins (MetI) and a solute-binding protein (MetQ).

The protein localises to the cell membrane. The enzyme catalyses L-methionine(out) + ATP + H2O = L-methionine(in) + ADP + phosphate + H(+). The catalysed reaction is D-methionine(out) + ATP + H2O = D-methionine(in) + ADP + phosphate + H(+). Part of the ABC transporter complex MetNIQ involved in methionine import. Responsible for energy coupling to the transport system. The sequence is that of Methionine import ATP-binding protein MetN from Streptomyces griseus.